A 787-amino-acid polypeptide reads, in one-letter code: Phenylalanine--tRNA ligase beta subunit (787 aa).

Positions 38–151 (GQDPAPFVVA…SDYEVGDSFF (114 aa)) constitute a tRNA-binding domain. One can recognise a B5 domain in the interval 397-474 (SEGRVISFNP…RMHGYDKVQE (78 aa)). 4 residues coordinate Mg(2+): Asp452, Asp458, Glu461, and Glu462. Residues 694-785 (HKYQPVKRDF…VAQKLGGELR (92 aa)) enclose the FDX-ACB domain.

This sequence belongs to the phenylalanyl-tRNA synthetase beta subunit family. Type 1 subfamily. Tetramer of two alpha and two beta subunits. Mg(2+) serves as cofactor.

The protein localises to the cytoplasm. It catalyses the reaction tRNA(Phe) + L-phenylalanine + ATP = L-phenylalanyl-tRNA(Phe) + AMP + diphosphate + H(+). This is Phenylalanine--tRNA ligase beta subunit from Anaplasma marginale (strain St. Maries).